We begin with the raw amino-acid sequence, 206 residues long: LexA repressor (206 aa).

Residues 28-48 constitute a DNA-binding region (H-T-H motif); sequence RAEIAKRLGFKSANAAEEHLK. Catalysis depends on for autocatalytic cleavage activity residues S123 and K160.

The protein belongs to the peptidase S24 family. As to quaternary structure, homodimer.

It carries out the reaction Hydrolysis of Ala-|-Gly bond in repressor LexA.. In terms of biological role, represses a number of genes involved in the response to DNA damage (SOS response), including recA and lexA. In the presence of single-stranded DNA, RecA interacts with LexA causing an autocatalytic cleavage which disrupts the DNA-binding part of LexA, leading to derepression of the SOS regulon and eventually DNA repair. The chain is LexA repressor from Shewanella sediminis (strain HAW-EB3).